A 185-amino-acid polypeptide reads, in one-letter code: GTP-binding protein rhb1 (185 aa).

11 residues coordinate GTP: S16, G18, K19, S20, S21, V32, Y35, T38, N119, D122, and A150. Mg(2+) is bound at residue S20. The short motif at 35–43 (YYPTIENTF) is the Effector region element. Residue T38 coordinates Mg(2+). Residue C182 is modified to Cysteine methyl ester. Residue C182 is the site of S-farnesyl cysteine attachment. Residues 183–185 (VIA) constitute a propeptide, removed in mature form.

The protein belongs to the small GTPase superfamily. Rheb family.

It is found in the cell membrane. It catalyses the reaction GTP + H2O = GDP + phosphate + H(+). Binds GTP and exhibits intrinsic GTPase activity. Regulates entry into stationary phase when extracellular nitrogen levels are adequate for growth. This is GTP-binding protein rhb1 (rhb1) from Schizosaccharomyces pombe (strain 972 / ATCC 24843) (Fission yeast).